A 512-amino-acid polypeptide reads, in one-letter code: Cytoplasmic tRNA 2-thiolation protein 2-B (512 aa).

Residues 196–215 (VTDSDSPGSSDKMYQSTCSR) form a disordered region. Polar residues predominate over residues 199-214 (SDSPGSSDKMYQSTCS).

It belongs to the CTU2/NCS2 family.

The protein localises to the cytoplasm. Its pathway is tRNA modification; 5-methoxycarbonylmethyl-2-thiouridine-tRNA biosynthesis. In terms of biological role, plays a central role in 2-thiolation of mcm(5)S(2)U at tRNA wobble positions of tRNA(Lys), tRNA(Glu) and tRNA(Gln). May act by forming a heterodimer with ctu1/atpbd3 that ligates sulfur from thiocarboxylated urm1 onto the uridine of tRNAs at wobble position. In Xenopus laevis (African clawed frog), this protein is Cytoplasmic tRNA 2-thiolation protein 2-B (ctu2-b).